We begin with the raw amino-acid sequence, 584 residues long: HERV-H_2q24.3 provirus ancestral Env polyprotein (584 aa).

A signal peptide spans 1-35 (MIFAGKAPSNTSTLMKFYSLLLYSLLFSFPFLCHP). The Extracellular segment spans residues 36-523 (LPLPSYLHHT…WALSNWMSWV (488 aa)). Residue Asn-47 is glycosylated (N-linked (GlcNAc...) asparagine). The CXXC signature appears at 64-67 (CWLC). N-linked (GlcNAc...) asparagine glycans are attached at residues Asn-199, Asn-222, Asn-265, Asn-283, Asn-352, and Asn-370. Positions 388–408 (VIPLIPLMVGLGLSASTVALG) are fusion peptide. The CKS-17 signature appears at 454–470 (LQNRRGLDLLTAEKGGL). Residues Cys-471 and Cys-478 are joined by a disulfide bond. Residues 471 to 479 (CIFLNEECC) carry the CX6CC motif. N-linked (GlcNAc...) asparagine glycosylation is present at Asn-483. Residues 524–544 (LPIVSPLIPIFLLLLFGPCIF) traverse the membrane as a helical segment. The Cytoplasmic segment spans residues 545–584 (RLVSQFIQNRIQAITNHSIRQMFLLTSPQYHPLPQDLPSA).

It belongs to the gamma type-C retroviral envelope protein family. HERV class-I H env subfamily. As to quaternary structure, the surface (SU) and transmembrane (TM) proteins form a heterodimer. SU and TM are attached by noncovalent interactions or by a labile interchain disulfide bond. Specific enzymatic cleavages in vivo yield the mature SU and TM proteins. In terms of processing, the CXXC motif is highly conserved across a broad range of retroviral envelope proteins. It is thought to participate in the formation of a labile disulfide bond possibly with the CX6CC motif present in the transmembrane protein. Isomerization of the intersubunit disulfide bond to an SU intrachain disulfide bond is thought to occur upon receptor recognition in order to allow membrane fusion. As to expression, low expression in skin and testis. No expression in several cell lines.

It localises to the virion. It is found in the cell membrane. Retroviral envelope proteins mediate receptor recognition and membrane fusion during early infection. Endogenous envelope proteins may have kept, lost or modified their original function during evolution. This endogenous envelope protein has lost its original fusogenic properties but has immunosuppressive properties in vivo. Its function is as follows. SU mediates receptor recognition. Functionally, TM anchors the envelope heterodimer to the viral membrane through one transmembrane domain. The other hydrophobic domain, called fusion peptide, mediates fusion of the viral membrane with the target cell membrane. This Homo sapiens (Human) protein is HERV-H_2q24.3 provirus ancestral Env polyprotein.